The primary structure comprises 318 residues: MNYQVLLYYKYMTIDDPEQFAQDHLAFCKAHHLKGRILVSTEGINGTLSGTKEETEQYMAHMHADERFKDMVFKIDEAEGHAFKKMHVRPRKEIVALDLEDDVDPRHTTGQYLSPVEFRKALEDDDTVIIDARNDYEFDLGHFRGAIRPNITRFRDLPDWIKENKALFADKKVVTYCTGGIRCEKFSGWLLKEGFEDVAQLHGGIATYGKDPETKGEYWDGKMYVFDDRISVDINQVEKTIIGKDWFDGKPCERYINCANPECNKQILVSEENETKYLGACSYECAKHERNRYVQANNISDNEWQQRLTNFDDLHQHA.

In terms of domain architecture, Rhodanese spans 123-217 (EDDDTVIIDA…YGKDPETKGE (95 aa)). Cys177 acts as the Cysteine persulfide intermediate in catalysis.

Belongs to the TrhO family.

The enzyme catalyses uridine(34) in tRNA + AH2 + O2 = 5-hydroxyuridine(34) in tRNA + A + H2O. Functionally, catalyzes oxygen-dependent 5-hydroxyuridine (ho5U) modification at position 34 in tRNAs. The polypeptide is tRNA uridine(34) hydroxylase (Staphylococcus aureus (strain USA300)).